The sequence spans 99 residues: Bacterial microcompartment shell vertex protein EutN (99 aa).

The region spanning 5 to 87 (MKLAVVTGQI…VDLCVIGIVD (83 aa)) is the BMV domain.

Belongs to the CcmL/EutN family. Homopentamer with a small central pore.

The protein localises to the bacterial microcompartment. Its pathway is amine and polyamine degradation; ethanolamine degradation. Functionally, probably forms vertices in the bacterial microcompartment (BMC) shell dedicated to ethanolamine degradation. Expression of eutK, eutL, eutM, eutN, eutS (eutSMNLK) in E.coli leads to formation of a single BMC. Coexpression of eutQ with eutSMNLK permits E.coli to make cells with more than one mobile BMC, as is usual in vivo. It may be involved in transporting positively charged molecules into and out of the BMC. The ethanolamine (EA) catabolic bacterial microcompartment (BMC) probably concentrates low levels of ethanolamine catabolic enzymes, concentrates volatile reaction intermediates, keeps the level of toxic acetaldehyde low, generates enough acetyl-CoA to support cell growth, and maintains a pool of free coenzyme A (CoA) and NAD. In terms of biological role, expression of the eut operon allows this bacteria to use ethanolamine (EA) as a carbon, nitrogen and energy source. It relies on cobalamin (vitamin B12) both as a cofactor for the ethanolamine ammonia-lyase (EAL) activity and to induce the operon. EA enhances bacterial survival in macrophages in a concentration-dependent manner, suggesting it is an important nutrient during infection. In Salmonella typhimurium (strain LT2 / SGSC1412 / ATCC 700720), this protein is Bacterial microcompartment shell vertex protein EutN.